The following is a 257-amino-acid chain: Putative transcription factor R430 (257 aa).

Disordered stretches follow at residues 1 to 35 and 58 to 77; these read MEKFFITDNTTDNTTDNTTDNTTDNTTDKLTDNNS and SLKSPSDKSSSGKSSIPNKS. Low complexity predominate over residues 7-25; sequence TDNTTDNTTDNTTDNTTDN. Over residues 26 to 35 the composition is skewed to basic and acidic residues; that stretch reads TTDKLTDNNS.

The protein belongs to the nucleo-cytoplasmic large DNA viruses (NCLDVs) VLTF-3 family.

Putative transcription factor. In Acanthamoeba polyphaga (Amoeba), this protein is Putative transcription factor R430.